The following is a 146-amino-acid chain: Deoxyuridine 5'-triphosphate nucleotidohydrolase (146 aa).

Substrate contacts are provided by residues 66–68, Asn-79, 83–85, and Lys-93; these read RSG and TVD.

The protein belongs to the dUTPase family. The cofactor is Mg(2+).

The enzyme catalyses dUTP + H2O = dUMP + diphosphate + H(+). The protein operates within pyrimidine metabolism; dUMP biosynthesis; dUMP from dCTP (dUTP route): step 2/2. In terms of biological role, this enzyme is involved in nucleotide metabolism: it produces dUMP, the immediate precursor of thymidine nucleotides and it decreases the intracellular concentration of dUTP so that uracil cannot be incorporated into DNA. The chain is Deoxyuridine 5'-triphosphate nucleotidohydrolase from Fusobacterium nucleatum subsp. nucleatum (strain ATCC 25586 / DSM 15643 / BCRC 10681 / CIP 101130 / JCM 8532 / KCTC 2640 / LMG 13131 / VPI 4355).